A 353-amino-acid chain; its full sequence is Photosystem II protein D1 (353 aa).

T2 carries the N-acetylthreonine modification. T2 carries the phosphothreonine modification. A run of 3 helical transmembrane segments spans residues 29–46 (YVGWFGVIMIPTLLTAVS), 118–133 (HFFLGICCYMGREWEL), and 142–156 (WIAVAYSAPVAAATA). Position 118 (H118) interacts with chlorophyll a. Y126 is a binding site for pheophytin a. 2 residues coordinate [CaMn4O5] cluster: D170 and E189. A helical transmembrane segment spans residues 197–218 (FHMLGVAGVFGGSLFSAMHGSL). Residue H198 coordinates chlorophyll a. A quinone-binding positions include H215 and 264–265 (SF). Fe cation is bound at residue H215. H272 lines the Fe cation pocket. Residues 274–288 (FLAAWPVVGIWFTAL) traverse the membrane as a helical segment. The [CaMn4O5] cluster site is built by H332, E333, D342, and A344. A propeptide spanning residues 345–353 (SVEAPSING) is cleaved from the precursor.

The protein belongs to the reaction center PufL/M/PsbA/D family. In terms of assembly, PSII is composed of 1 copy each of membrane proteins PsbA, PsbB, PsbC, PsbD, PsbE, PsbF, PsbH, PsbI, PsbJ, PsbK, PsbL, PsbM, PsbT, PsbX, PsbY, PsbZ, Psb30/Ycf12, at least 3 peripheral proteins of the oxygen-evolving complex and a large number of cofactors. It forms dimeric complexes. Requires The D1/D2 heterodimer binds P680, chlorophylls that are the primary electron donor of PSII, and subsequent electron acceptors. It shares a non-heme iron and each subunit binds pheophytin, quinone, additional chlorophylls, carotenoids and lipids. D1 provides most of the ligands for the Mn4-Ca-O5 cluster of the oxygen-evolving complex (OEC). There is also a Cl(-1) ion associated with D1 and D2, which is required for oxygen evolution. The PSII complex binds additional chlorophylls, carotenoids and specific lipids. as cofactor. In terms of processing, tyr-161 forms a radical intermediate that is referred to as redox-active TyrZ, YZ or Y-Z. C-terminally processed by CTPA; processing is essential to allow assembly of the oxygen-evolving complex and thus photosynthetic growth.

The protein resides in the plastid. It is found in the chloroplast thylakoid membrane. It catalyses the reaction 2 a plastoquinone + 4 hnu + 2 H2O = 2 a plastoquinol + O2. Photosystem II (PSII) is a light-driven water:plastoquinone oxidoreductase that uses light energy to abstract electrons from H(2)O, generating O(2) and a proton gradient subsequently used for ATP formation. It consists of a core antenna complex that captures photons, and an electron transfer chain that converts photonic excitation into a charge separation. The D1/D2 (PsbA/PsbD) reaction center heterodimer binds P680, the primary electron donor of PSII as well as several subsequent electron acceptors. The chain is Photosystem II protein D1 from Tupiella akineta (Green alga).